A 600-amino-acid chain; its full sequence is Elongation factor 4 (600 aa).

The tr-type G domain maps to 5–187; it reads SRIRNFSIIA…AIVTRLPPPK (183 aa). Residues 17–22 and 134–137 contribute to the GTP site; these read DHGKST and NKID.

The protein belongs to the TRAFAC class translation factor GTPase superfamily. Classic translation factor GTPase family. LepA subfamily.

The protein localises to the cell inner membrane. It catalyses the reaction GTP + H2O = GDP + phosphate + H(+). Required for accurate and efficient protein synthesis under certain stress conditions. May act as a fidelity factor of the translation reaction, by catalyzing a one-codon backward translocation of tRNAs on improperly translocated ribosomes. Back-translocation proceeds from a post-translocation (POST) complex to a pre-translocation (PRE) complex, thus giving elongation factor G a second chance to translocate the tRNAs correctly. Binds to ribosomes in a GTP-dependent manner. This Rhodospirillum centenum (strain ATCC 51521 / SW) protein is Elongation factor 4.